Here is a 767-residue protein sequence, read N- to C-terminus: Photosystem I P700 chlorophyll a apoprotein A1 (767 aa).

The segment at 1-22 is disordered; sequence MTISPPESGEKNKKVLEDPVKA. Basic and acidic residues predominate over residues 8 to 22; the sequence is SGEKNKKVLEDPVKA. 8 consecutive transmembrane segments (helical) span residues 76 to 99, 162 to 185, 201 to 225, 309 to 327, 368 to 391, 407 to 433, 455 to 477, and 558 to 576; these read IFSA…FHGA, LMAL…FHYH, LNHH…HIGA, VSHH…GHMY, RHAQ…HHMY, LGLF…IAMV, ALIS…LYIH, and LMIH…LILL. The [4Fe-4S] cluster site is built by cysteine 600 and cysteine 609. Helical transmembrane passes span 616 to 637 and 681 to 703; these read HVFL…HFSW and ISMY…MFLF. Histidine 692 serves as a coordination point for divinylchlorophyll a'. Divinyl chlorophyll a contacts are provided by methionine 700 and tyrosine 708. Position 709 (tryptophan 709) interacts with phylloquinone. Residues 741–761 form a helical membrane-spanning segment; that stretch reads AVGVTHFLVGGIATTWAFFHA.

This sequence belongs to the PsaA/PsaB family. The PsaA/B heterodimer binds the P700 divinyl chlorophyll special pair and subsequent electron acceptors. PSI consists of a core antenna complex that captures photons, and an electron transfer chain that converts photonic excitation into a charge separation. The cyanobacterial PSI reaction center is composed of one copy each of PsaA,B,C,D,E,F,I,J,K,L,M and X, and forms trimeric complexes. Requires PSI electron transfer chain: 5 divinyl chlorophyll a, 1 divinyl chlorophyll a', 2 phylloquinones and 3 4Fe-4S clusters. PSI core antenna: 90 divinyl chlorophyll a, 22 carotenoids, 3 phospholipids and 1 galactolipid. P700 is a divinyl chlorophyll a/divinyl chlorophyll a' dimer, A0 is one or more divinyl chlorophyll a, A1 is one or both phylloquinones and FX is a shared 4Fe-4S iron-sulfur center. as cofactor.

It localises to the cellular thylakoid membrane. It catalyses the reaction reduced [plastocyanin] + hnu + oxidized [2Fe-2S]-[ferredoxin] = oxidized [plastocyanin] + reduced [2Fe-2S]-[ferredoxin]. Its function is as follows. PsaA and PsaB bind P700, the primary electron donor of photosystem I (PSI), as well as the electron acceptors A0, A1 and FX. PSI is a plastocyanin/cytochrome c6-ferredoxin oxidoreductase, converting photonic excitation into a charge separation, which transfers an electron from the donor P700 chlorophyll pair to the spectroscopically characterized acceptors A0, A1, FX, FA and FB in turn. Oxidized P700 is reduced on the lumenal side of the thylakoid membrane by plastocyanin or cytochrome c6. The chain is Photosystem I P700 chlorophyll a apoprotein A1 from Prochlorococcus marinus (strain AS9601).